The chain runs to 645 residues: DNA ligase (645 aa).

Residues 30 to 34, 79 to 80, and E106 contribute to the NAD(+) site; these read DIEYD and SM. K108 serves as the catalytic N6-AMP-lysine intermediate. R129, E163, and K302 together coordinate NAD(+). Residues C396, C399, C412, and C417 each coordinate Zn(2+). The 76-residue stretch at 570–645 folds into the BRCT domain; sequence ISQNVFTKKT…ISEDEFKEML (76 aa).

It belongs to the NAD-dependent DNA ligase family. LigA subfamily. Mg(2+) serves as cofactor. Mn(2+) is required as a cofactor.

The enzyme catalyses NAD(+) + (deoxyribonucleotide)n-3'-hydroxyl + 5'-phospho-(deoxyribonucleotide)m = (deoxyribonucleotide)n+m + AMP + beta-nicotinamide D-nucleotide.. Its function is as follows. DNA ligase that catalyzes the formation of phosphodiester linkages between 5'-phosphoryl and 3'-hydroxyl groups in double-stranded DNA using NAD as a coenzyme and as the energy source for the reaction. It is essential for DNA replication and repair of damaged DNA. In Campylobacter hominis (strain ATCC BAA-381 / DSM 21671 / CCUG 45161 / LMG 19568 / NCTC 13146 / CH001A), this protein is DNA ligase.